The sequence spans 314 residues: Formimidoylglutamase (314 aa).

Mn(2+) contacts are provided by His-127, Asp-153, His-155, Asp-157, Asp-245, and Asp-247.

Belongs to the arginase family. The cofactor is Mn(2+).

The catalysed reaction is N-formimidoyl-L-glutamate + H2O = formamide + L-glutamate. It functions in the pathway amino-acid degradation; L-histidine degradation into L-glutamate; L-glutamate from N-formimidoyl-L-glutamate (hydrolase route): step 1/1. In terms of biological role, catalyzes the conversion of N-formimidoyl-L-glutamate to L-glutamate and formamide. This is Formimidoylglutamase from Aeromonas salmonicida (strain A449).